Reading from the N-terminus, the 406-residue chain is uncharacterized protein (406 aa).

This is an uncharacterized protein from Escherichia coli (strain K12).